The primary structure comprises 295 residues: Acetylglutamate kinase (295 aa).

Residues 66-67, R88, and N193 contribute to the substrate site; that span reads GG.

Belongs to the acetylglutamate kinase family. ArgB subfamily.

It is found in the cytoplasm. The catalysed reaction is N-acetyl-L-glutamate + ATP = N-acetyl-L-glutamyl 5-phosphate + ADP. Its pathway is amino-acid biosynthesis; L-arginine biosynthesis; N(2)-acetyl-L-ornithine from L-glutamate: step 2/4. Functionally, catalyzes the ATP-dependent phosphorylation of N-acetyl-L-glutamate. This Rhizobium johnstonii (strain DSM 114642 / LMG 32736 / 3841) (Rhizobium leguminosarum bv. viciae) protein is Acetylglutamate kinase.